The following is a 58-amino-acid chain: Putative transcript Y 13 protein (58 aa).

A helical transmembrane segment spans residues 17–37 (LLGWDLNLSLFLGLCLMLLLA).

Its subcellular location is the membrane. In Homo sapiens (Human), this protein is Putative transcript Y 13 protein (TTTY13).